Reading from the N-terminus, the 131-residue chain is Large-conductance mechanosensitive channel (131 aa).

Transmembrane regions (helical) follow at residues 8-28 (FAMRGNVVDLAVGVIIGGAFG), 30-50 (IVSSLVNDILMPLVGLLLGGV), and 67-87 (GMFIQTVVDFFIISFSIFVFV).

Belongs to the MscL family. In terms of assembly, homopentamer.

Its subcellular location is the cell membrane. Its function is as follows. Channel that opens in response to stretch forces in the membrane lipid bilayer. May participate in the regulation of osmotic pressure changes within the cell. The polypeptide is Large-conductance mechanosensitive channel (Geobacillus sp. (strain WCH70)).